The following is a 545-amino-acid chain: Protein BTN1 (545 aa).

The interval 23 to 49 (AHSSASDPRRTMVTNTSESPLASRQAT) is disordered. Residues 34–49 (MVTNTSESPLASRQAT) are compositionally biased toward polar residues. The next 5 helical transmembrane spans lie at 66 to 86 (AFFL…TAAL), 97 to 117 (LVSF…PYFL), 127 to 147 (VWSC…FPAL), 205 to 225 (VGWF…AWWV), and 234 to 254 (GMAI…IILP). Positions 276–304 (TEDDAVERSSSDDQPTTANDDRQDSTIHI) are disordered. The next 3 helical transmembrane spans lie at 322–342 (MALL…VYAM), 408–428 (LLWL…TESL), and 440–460 (LVIV…VSVF).

Belongs to the battenin family.

Its subcellular location is the vacuole membrane. In terms of biological role, involved in vacuolar transport and vacuole pH homeostasis. Also required for cytokinesis. The chain is Protein BTN1 (BTN1) from Mycosarcoma maydis (Corn smut fungus).